Consider the following 115-residue polypeptide: Putative UPF0320 protein YKL225W (115 aa).

This sequence belongs to the UPF0320 family.

The sequence is that of Putative UPF0320 protein YKL225W from Saccharomyces cerevisiae (strain ATCC 204508 / S288c) (Baker's yeast).